Reading from the N-terminus, the 278-residue chain is NAD-capped RNA hydrolase NudC (278 aa).

A substrate-binding site is contributed by R84. Residues C114 and C117 each contribute to the Zn(2+) site. E127 provides a ligand contact to substrate. C132 is a Zn(2+) binding site. Residue Y140 coordinates substrate. In terms of domain architecture, Nudix hydrolase spans 141 to 264 (PRISPSMIVL…SIARYLIEAY (124 aa)). A divalent metal cation contacts are provided by A174, E190, and E194. Positions 175–196 (GFVEPGESAEDCVHREVMEEVQ) match the Nudix box motif. 208–215 (QCWPFPHS) provides a ligand contact to substrate. Residue E235 participates in a divalent metal cation binding. Position 257 (A257) interacts with substrate.

This sequence belongs to the Nudix hydrolase family. NudC subfamily. In terms of assembly, homodimer. The cofactor is Mg(2+). It depends on Mn(2+) as a cofactor. Zn(2+) serves as cofactor.

The catalysed reaction is a 5'-end NAD(+)-phospho-ribonucleoside in mRNA + H2O = a 5'-end phospho-adenosine-phospho-ribonucleoside in mRNA + beta-nicotinamide D-ribonucleotide + 2 H(+). It catalyses the reaction NAD(+) + H2O = beta-nicotinamide D-ribonucleotide + AMP + 2 H(+). It carries out the reaction NADH + H2O = reduced beta-nicotinamide D-ribonucleotide + AMP + 2 H(+). Functionally, mRNA decapping enzyme that specifically removes the nicotinamide adenine dinucleotide (NAD) cap from a subset of mRNAs by hydrolyzing the diphosphate linkage to produce nicotinamide mononucleotide (NMN) and 5' monophosphate mRNA. The NAD-cap is present at the 5'-end of some mRNAs and stabilizes RNA against 5'-processing. Has preference for mRNAs with a 5'-end purine. Catalyzes the hydrolysis of a broad range of dinucleotide pyrophosphates. This Pseudomonas syringae pv. syringae (strain B728a) protein is NAD-capped RNA hydrolase NudC.